The primary structure comprises 520 residues: GMP synthase [glutamine-hydrolyzing] (520 aa).

In terms of domain architecture, Glutamine amidotransferase type-1 spans 12–205 (KIIVLDYGSQ…AISICGARGD (194 aa)). Residue cysteine 89 is the Nucleophile of the active site. Residues histidine 179 and glutamate 181 contribute to the active site. The 190-residue stretch at 206–395 (WSMDNFIDME…LGMPDEVVWR (190 aa)) folds into the GMPS ATP-PPase domain. Residue 233–239 (SGGVDSS) coordinates ATP.

Homodimer.

It carries out the reaction XMP + L-glutamine + ATP + H2O = GMP + L-glutamate + AMP + diphosphate + 2 H(+). It participates in purine metabolism; GMP biosynthesis; GMP from XMP (L-Gln route): step 1/1. Its function is as follows. Catalyzes the synthesis of GMP from XMP. In Streptococcus equi subsp. zooepidemicus (strain H70), this protein is GMP synthase [glutamine-hydrolyzing].